Consider the following 947-residue polypeptide: Protein translocase subunit SecA (947 aa).

ATP-binding positions include Gln87, 105–109, and Asp525; that span reads GEGKT. Residues 905–928 are disordered; sequence PADNADKTARNPNDPSTWGKVGRN. Cys931, Cys933, Cys942, and His943 together coordinate Zn(2+).

It belongs to the SecA family. In terms of assembly, monomer and homodimer. Part of the essential Sec protein translocation apparatus which comprises SecA, SecYEG and auxiliary proteins SecDF-YajC and YidC. It depends on Zn(2+) as a cofactor.

It localises to the cell inner membrane. The protein localises to the cytoplasm. The catalysed reaction is ATP + H2O + cellular proteinSide 1 = ADP + phosphate + cellular proteinSide 2.. Its function is as follows. Part of the Sec protein translocase complex. Interacts with the SecYEG preprotein conducting channel. Has a central role in coupling the hydrolysis of ATP to the transfer of proteins into and across the cell membrane, serving both as a receptor for the preprotein-SecB complex and as an ATP-driven molecular motor driving the stepwise translocation of polypeptide chains across the membrane. The protein is Protein translocase subunit SecA of Rhodopseudomonas palustris (strain BisB18).